The chain runs to 422 residues: Serine hydroxymethyltransferase (422 aa).

(6S)-5,6,7,8-tetrahydrofolate is bound by residues L118 and 122 to 124 (GHL). K227 carries the N6-(pyridoxal phosphate)lysine modification. Residue E242 participates in (6S)-5,6,7,8-tetrahydrofolate binding.

The protein belongs to the SHMT family. In terms of assembly, homodimer. Pyridoxal 5'-phosphate is required as a cofactor.

The protein resides in the cytoplasm. The catalysed reaction is (6R)-5,10-methylene-5,6,7,8-tetrahydrofolate + glycine + H2O = (6S)-5,6,7,8-tetrahydrofolate + L-serine. It functions in the pathway one-carbon metabolism; tetrahydrofolate interconversion. The protein operates within amino-acid biosynthesis; glycine biosynthesis; glycine from L-serine: step 1/1. Functionally, catalyzes the reversible interconversion of serine and glycine with tetrahydrofolate (THF) serving as the one-carbon carrier. This reaction serves as the major source of one-carbon groups required for the biosynthesis of purines, thymidylate, methionine, and other important biomolecules. Also exhibits THF-independent aldolase activity toward beta-hydroxyamino acids, producing glycine and aldehydes, via a retro-aldol mechanism. This Sulfurihydrogenibium sp. (strain YO3AOP1) protein is Serine hydroxymethyltransferase.